Consider the following 257-residue polypeptide: Small ribosomal subunit protein uS15m (257 aa).

A mitochondrion-targeting transit peptide spans 1–57 (MLRVAWRTLSLIRTRAVTQVLVPGLPGGGSAKFPFNQWGLQPRSLLLQAARGYVVRK). A disordered region spans residues 225–257 (RALKAAAAAQKQAKRRNPDSPAKAIPKTLKDSQ).

This sequence belongs to the universal ribosomal protein uS15 family. In terms of assembly, component of the mitochondrial small ribosomal subunit (mt-SSU). Mature mammalian 55S mitochondrial ribosomes consist of a small (28S) and a large (39S) subunit. The 28S small subunit contains a 12S ribosomal RNA (12S mt-rRNA) and 30 different proteins. The 39S large subunit contains a 16S rRNA (16S mt-rRNA), a copy of mitochondrial valine transfer RNA (mt-tRNA(Val)), which plays an integral structural role, and 52 different proteins. Interacts with METTL17.

It localises to the mitochondrion matrix. In Homo sapiens (Human), this protein is Small ribosomal subunit protein uS15m (MRPS15).